A 632-amino-acid polypeptide reads, in one-letter code: Effector protein hopAD1 (632 aa).

The segment at T13–R34 is disordered. Over residues V15 to K32 the composition is skewed to polar residues.

The protein resides in the secreted. In Pseudomonas syringae pv. tomato (strain ATCC BAA-871 / DC3000), this protein is Effector protein hopAD1 (hopAD1).